A 618-amino-acid polypeptide reads, in one-letter code: MAISMASPLSSWPWAFLGSYKYLLYGPVVGKVVQEWREQGRLPLGTSWCLHLILLLALRSLTMLFFTRRRRVVDDGVDFRQIDTEWDWDNMVIMQTLIAAVLVTSRVFPATSDLSAWDLRGWAIAVVLHVAVSEPAFYWAHRALHLGPLFSRYHSLHHSFQATQALTAGFVTPLESLILTLVAWAPLAGAFMAGHGSVSLVYGHILLFDYLRSMGYSNVEVISHKTFQDFPFLRYLIYTPSYLSLHHREKDSNFCLFMPLFDALGGTLNPKSWQLQKEVDLGKNHRVPDFVFLVHVVDVVSSMHVPFAFRACSSLPFATHLVLLPLWPIAFGFMLLQWFCSKTFTVSFYKLRGFLHQTWSVPRYGFQYFIPSAKKGINEMIELAILRADKMGVKVLSLAALNKNEALNGGGTLFVRKHPDLRVRVVHGNTLTAAVILNEIPGDVAEVFLTGATSKLGRAIALYLCRKKIRVLMLTLSTERFMNIQREAPAEFQQYLVQVTKYQAAQNCKTWIVGKWLSPREQRWAPAGTHFHQFVVPPIIGFRRDCTYGKLAAMRLPEDVEGLGTCEYTMGRGVVHACHAGGVVHFLEGWDHHEVGAIDVDRIDAVWNAALRHGLTPA.

7 helical membrane-spanning segments follow: residues 9-29, 46-66, 91-111, 121-141, 174-194, 289-309, and 315-335; these read LSSWPWAFLGSYKYLLYGPVV, TSWCLHLILLLALRSLTMLFF, MVIMQTLIAAVLVTSRVFPAT, GWAIAVVLHVAVSEPAFYWAH, LESLILTLVAWAPLAGAFMAG, DFVFLVHVVDVVSSMHVPFAF, and LPFATHLVLLPLWPIAFGFML. The Fatty acid hydroxylase domain maps to 127–267; it reads VLHVAVSEPA…MPLFDALGGT (141 aa).

Belongs to the sterol desaturase family. Homodimer. In terms of tissue distribution, expressed in germinating seeds and stamens.

Its subcellular location is the endoplasmic reticulum membrane. The enzyme catalyses a long-chain fatty aldehyde + 2 NADPH + O2 + H(+) = a long-chain alkane + formate + 2 NADP(+) + H2O. Aldehyde decarbonylase involved in the conversion of aldehydes to alkanes. Core component of a very-long-chain alkane synthesis complex. The protein is Very-long-chain aldehyde decarbonylase GL1-3 of Oryza sativa subsp. japonica (Rice).